Consider the following 387-residue polypeptide: 3-hydroxy-D-aspartate aldolase (387 aa).

K62 carries the N6-(pyridoxal phosphate)lysine modification. Residues Q85, T238, 256–257, and Y265 contribute to the pyridoxal 5'-phosphate site; that span reads GS. Positions 355 and 357 each coordinate Mg(2+).

Belongs to the DSD1 family. Homodimer. It depends on pyridoxal 5'-phosphate as a cofactor. Requires Mg(2+) as cofactor.

It catalyses the reaction (3S)-3-hydroxy-D-aspartate = glyoxylate + glycine. The enzyme catalyses (3R)-3-hydroxy-D-aspartate = glyoxylate + glycine. Its function is as follows. Catalyzes the condensation of glyoxylate and glycine into (2R,3S)-beta-hydroxyaspartate ((3S)-3-hydroxy-D-aspartate). Is essential for the growth of P.denitrificans in the presence of glycolate and glyoxylate since it functions in glyoxylate assimilation via the beta-hydroxyaspartate cycle (BHAC). Is also able to catalyze the reverse reaction in vitro, i.e. the cleavage of (3S)-3-hydroxy-D-aspartate, and that of D-threonine to a lesser extent. The chain is 3-hydroxy-D-aspartate aldolase from Paracoccus denitrificans (strain Pd 1222).